The following is a 246-amino-acid chain: Outer membrane protein assembly factor BamD (246 aa).

The first 22 residues, 1-22 (MKKKNSIIFVFMILFFNSTVQS), serve as a signal peptide directing secretion.

Belongs to the BamD family. Part of the Bam complex.

Its subcellular location is the cell outer membrane. Part of the outer membrane protein assembly complex, which is involved in assembly and insertion of beta-barrel proteins into the outer membrane. This chain is Outer membrane protein assembly factor BamD, found in Buchnera aphidicola subsp. Acyrthosiphon pisum (strain APS) (Acyrthosiphon pisum symbiotic bacterium).